Reading from the N-terminus, the 256-residue chain is HTH-type transcriptional regulator PrtR (256 aa).

The HTH cro/C1-type domain maps to Leu16–Leu69. Positions Gln27–Ser46 form a DNA-binding region, H-T-H motif.

In terms of biological role, represses the promoter activity of the prtN gene. The sequence is that of HTH-type transcriptional regulator PrtR (prtR) from Pseudomonas aeruginosa (strain ATCC 15692 / DSM 22644 / CIP 104116 / JCM 14847 / LMG 12228 / 1C / PRS 101 / PAO1).